Here is a 305-residue protein sequence, read N- to C-terminus: Tetraspanin-12 (305 aa).

The Cytoplasmic portion of the chain corresponds to 1–12 (MAREDSVKCLRC). S-palmitoyl cysteine attachment occurs at residues C9 and C12. The chain crosses the membrane as a helical span at residues 13 to 33 (LLYALNLLFWLMSISVLAVSA). Topologically, residues 34-59 (WMRDYLNNVLTLTAETRVEEAVILTY) are extracellular. The chain crosses the membrane as a helical span at residues 60 to 80 (FPVVHPVMIAVCCFLIIVGML). The Cytoplasmic portion of the chain corresponds to 81 to 89 (GYCGTVKRN). A lipid anchor (S-palmitoyl cysteine) is attached at C83. Residues 90 to 110 (LLLLAWYFGSLLVIFCVELAC) form a helical membrane-spanning segment. Residues 111–224 (GVWTYEQEIM…RGTKQLQVLR (114 aa)) lie on the Extracellular side of the membrane. Residues 225-245 (FLGISIGVTQILAMILTITLL) form a helical membrane-spanning segment. At 246–305 (WALYYDRREPGTDQMMALKNDTTQHLPCHSVELLKPSLSRIFEHTSMANSFNTHFEMEEL) the chain is on the cytoplasmic side.

The protein belongs to the tetraspanin (TM4SF) family. Component of a complex, at least composed of TSPAN12, FZD4 and norrin (NDP). Interacts (when palmitoylated) with ADAM10. Interacts with MMP14/MT1-MMP. Palmitoylated; required for interaction with ADAM10. The precise position of palmitoylated residues is unclear and occurs either on Cys-9, Cys-12 and/or Cys-83.

The protein resides in the cell membrane. Functionally, regulator of cell surface receptor signal transduction. Plays a central role in retinal vascularization by regulating norrin (NDP) signal transduction. Acts in concert with norrin (NDP) to promote FZD4 multimerization and subsequent activation of FZD4, leading to promote accumulation of beta-catenin (CTNNB1) and stimulate LEF/TCF-mediated transcriptional programs. Suprisingly, it only activates the norrin (NDP)-dependent activation of FZD4, while it does not activate the Wnt-dependent activation of FZD4, suggesting the existence of a Wnt-independent signaling that also promote accumulation the beta-catenin (CTNNB1). Acts as a regulator of membrane proteinases such as ADAM10 and MMP14/MT1-MMP. Activates ADAM10-dependent cleavage activity of amyloid precursor protein (APP). Activates MMP14/MT1-MMP-dependent cleavage activity. This Bos taurus (Bovine) protein is Tetraspanin-12 (TSPAN12).